The primary structure comprises 105 residues: Nucleoid-associated protein SaurJH1_0513 (105 aa).

The interval 1-33 (MRGGGNMQQMMKQMQKMQKKMAQEQKKLKEERI) is disordered. Residues 7–16 (MQQMMKQMQK) show a composition bias toward low complexity. Positions 21-33 (MAQEQKKLKEERI) are enriched in basic and acidic residues.

The protein belongs to the YbaB/EbfC family. As to quaternary structure, homodimer.

Its subcellular location is the cytoplasm. It localises to the nucleoid. Functionally, binds to DNA and alters its conformation. May be involved in regulation of gene expression, nucleoid organization and DNA protection. The chain is Nucleoid-associated protein SaurJH1_0513 from Staphylococcus aureus (strain JH1).